The chain runs to 200 residues: Small ribosomal subunit protein eS8A (200 aa).

Residues 1–31 (MGISRDSRHKRSATGAKRAQFRKKRKFELGR) form a disordered region. Position 62 is a phosphothreonine (T62). Phosphoserine is present on residues S66, S69, S73, and S86. T107 carries the post-translational modification Phosphothreonine. Phosphoserine is present on residues S154, S155, S158, and S161.

Belongs to the eukaryotic ribosomal protein eS8 family. In terms of assembly, component of the small ribosomal subunit (SSU). Mature yeast ribosomes consist of a small (40S) and a large (60S) subunit. The 40S small subunit contains 1 molecule of ribosomal RNA (18S rRNA) and 33 different proteins (encoded by 57 genes). The large 60S subunit contains 3 rRNA molecules (25S, 5.8S and 5S rRNA) and 46 different proteins (encoded by 81 genes).

Its subcellular location is the cytoplasm. In terms of biological role, component of the ribosome, a large ribonucleoprotein complex responsible for the synthesis of proteins in the cell. The small ribosomal subunit (SSU) binds messenger RNAs (mRNAs) and translates the encoded message by selecting cognate aminoacyl-transfer RNA (tRNA) molecules. The large subunit (LSU) contains the ribosomal catalytic site termed the peptidyl transferase center (PTC), which catalyzes the formation of peptide bonds, thereby polymerizing the amino acids delivered by tRNAs into a polypeptide chain. The nascent polypeptides leave the ribosome through a tunnel in the LSU and interact with protein factors that function in enzymatic processing, targeting, and the membrane insertion of nascent chains at the exit of the ribosomal tunnel. This chain is Small ribosomal subunit protein eS8A, found in Saccharomyces cerevisiae (strain ATCC 204508 / S288c) (Baker's yeast).